Consider the following 80-residue polypeptide: Cortexin-3 (80 aa).

The helical transmembrane segment at 28-48 threads the bilayer; that stretch reads TTFVFVILLFIFLGILIVRCF.

This sequence belongs to the cortexin family.

The protein resides in the membrane. The chain is Cortexin-3 (Ctxn3) from Mus musculus (Mouse).